A 131-amino-acid chain; its full sequence is MSWQAYVDDHLMCDIEGQHLTAAAIIGHDGSVWAQSATFPQFKPEEVAAIIKDFDEPGSLAPTGLHLGGTKYMVIQGEPGAVIRGKKGAGGITVKKTGQALIFGIYDEPLTPGQCNIIVERLGDYLLEQGQ.

Cys-13 and Cys-115 form a disulfide bridge. The short motif at 81-97 (AVIRGKKGAGGITVKKT) is the Involved in PIP2 interaction element. Thr-111 bears the Phosphothreonine mark.

The protein belongs to the profilin family. As to quaternary structure, occurs in many kinds of cells as a complex with monomeric actin in a 1:1 ratio. Phosphorylated by MAP kinases.

The protein resides in the cytoplasm. The protein localises to the cytoskeleton. Binds to actin and affects the structure of the cytoskeleton. At high concentrations, profilin prevents the polymerization of actin, whereas it enhances it at low concentrations. The sequence is that of Profilin-4 from Olea europaea (Common olive).